The chain runs to 235 residues: Protein mxl-3 (235 aa).

A disordered region spans residues 18–49; it reads EKQFRKRHHSDSSDDDSSSPKSASPSMDDDRR. Residues 47-60 form a basic motif region; that stretch reads DRRAHHNELERRRR. The bHLH domain maps to 47-98; sequence DRRAHHNELERRRRDHIKDHFTILKDAIPLLDGEKSSRALILKRAVEFIHVM. Residues 61 to 98 are helix-loop-helix motif; the sequence is DHIKDHFTILKDAIPLLDGEKSSRALILKRAVEFIHVM.

This sequence belongs to the MAX family. May form homodimer. Interacts (via N-terminus) with skn-1 isoforms a and c. As to expression, expressed in the intestine and in the AWC sensory neurons.

It localises to the nucleus. The protein localises to the cytoplasm. Transcription factor which regulates the expression of genes involved in lipid metabolism in response to nutrient availability. Binds to the E-box motif 5'-CACGTG-3'. Under well-fed conditions, binds to the promoter and represses the expression of lipase genes lipl-1, lipl-2, lipl-3 and to a lesser extent lipl-5, thereby preventing lipolysis. In response to a high-glucose diet, promotes fatty acid synthesis, elongation and desaturation by up-regulating transcription factor sbp-1 expression. Under well-fed conditions, acts remotely in the intestine to up-regulate the expression of chemoreceptor srh-234 gene in the ADL sensory neuron, possibly by regulating the insulin signaling pathway. This Caenorhabditis elegans protein is Protein mxl-3.